An 809-amino-acid chain; its full sequence is Lon protease (809 aa).

Positions 8–203 (LPVVALRNMA…RLCLILADEI (196 aa)) constitute a Lon N-terminal domain. Residue 354–361 (GPPGTGKT) coordinates ATP. Positions 629-809 (KDEVGIVCGL…MDEVLKHALV (181 aa)) constitute a Lon proteolytic domain. Catalysis depends on residues serine 716 and lysine 759.

The protein belongs to the peptidase S16 family. In terms of assembly, homohexamer. Organized in a ring with a central cavity.

The protein localises to the cytoplasm. The catalysed reaction is Hydrolysis of proteins in presence of ATP.. ATP-dependent serine protease that mediates the selective degradation of mutant and abnormal proteins as well as certain short-lived regulatory proteins. Required for cellular homeostasis and for survival from DNA damage and developmental changes induced by stress. Degrades polypeptides processively to yield small peptide fragments that are 5 to 10 amino acids long. Binds to DNA in a double-stranded, site-specific manner. In Lachnoclostridium phytofermentans (strain ATCC 700394 / DSM 18823 / ISDg) (Clostridium phytofermentans), this protein is Lon protease.